We begin with the raw amino-acid sequence, 418 residues long: tRNA-2-methylthio-N(6)-dimethylallyladenosine synthase (418 aa).

The MTTase N-terminal domain occupies 1 to 118 (MNYLIETIGC…ALKIMNLFRT (118 aa)). Positions 10, 46, 80, 143, 147, and 150 each coordinate [4Fe-4S] cluster. One can recognise a Radical SAM core domain in the interval 129–356 (IKSKIVRYIT…LKESNKISIE (228 aa)). Residues 359 to 418 (SEMLGSTQQVLAEEIKNGIIKARTKNGRKVFAEGRKEYIGKHINVNIKEAKINSLFGDIV) form the TRAM domain.

Belongs to the methylthiotransferase family. MiaB subfamily. Monomer. The cofactor is [4Fe-4S] cluster.

Its subcellular location is the cytoplasm. It carries out the reaction N(6)-dimethylallyladenosine(37) in tRNA + (sulfur carrier)-SH + AH2 + 2 S-adenosyl-L-methionine = 2-methylsulfanyl-N(6)-dimethylallyladenosine(37) in tRNA + (sulfur carrier)-H + 5'-deoxyadenosine + L-methionine + A + S-adenosyl-L-homocysteine + 2 H(+). Functionally, catalyzes the methylthiolation of N6-(dimethylallyl)adenosine (i(6)A), leading to the formation of 2-methylthio-N6-(dimethylallyl)adenosine (ms(2)i(6)A) at position 37 in tRNAs that read codons beginning with uridine. This is tRNA-2-methylthio-N(6)-dimethylallyladenosine synthase from Endomicrobium trichonymphae.